The chain runs to 437 residues: MGNKPTIAISHLGCEKNRIDSEHMLGLLAKAGYPVDNDEELADYVIVNTCSFIQAAREESVRTLVELAEANKKIIISGCMAQHFQDELLTELPEAVAIVGTGDYQKIVEIVERVETGERVKEVSADPTFIADENLPRYRTTSEGVAYLRVAEGCDYRCAFCIIPQLRGDQRSRSIESIVAEARQLASQGVQELILISQITTNYGLDLYGEPKLAELLRALGEVDIPWIRVHYAYPTGLTPKVIEAIRETPNVLPYLDLPLQHSHPDILRGMNRPWQGRVNDGIIERIKQAIPNAVLRTTFIVGFPGETEEHFSHLLEFVKRHEFDHVGVFTFSAEEGTAAFDLPDPVPQAIMDERRERLMLTQQPISERKNQAYIGQTVDVLIEQENPETGELIGRSARFSPEVDGLVYVTGEAILGAIVQVRITAADTYDLYGEIV.

Positions 5 to 116 (PTIAISHLGC…IVEIVERVET (112 aa)) constitute an MTTase N-terminal domain. C14, C50, C79, C154, C158, and C161 together coordinate [4Fe-4S] cluster. The 230-residue stretch at 140–369 (TTSEGVAYLR…MLTQQPISER (230 aa)) folds into the Radical SAM core domain. Positions 372–437 (QAYIGQTVDV…DTYDLYGEIV (66 aa)) constitute a TRAM domain.

Belongs to the methylthiotransferase family. RimO subfamily. The cofactor is [4Fe-4S] cluster.

It localises to the cytoplasm. It carries out the reaction L-aspartate(89)-[ribosomal protein uS12]-hydrogen + (sulfur carrier)-SH + AH2 + 2 S-adenosyl-L-methionine = 3-methylsulfanyl-L-aspartate(89)-[ribosomal protein uS12]-hydrogen + (sulfur carrier)-H + 5'-deoxyadenosine + L-methionine + A + S-adenosyl-L-homocysteine + 2 H(+). Functionally, catalyzes the methylthiolation of an aspartic acid residue of ribosomal protein uS12. This is Ribosomal protein uS12 methylthiotransferase RimO from Microcystis aeruginosa (strain NIES-843 / IAM M-2473).